The primary structure comprises 122 residues: Large ribosomal subunit protein uL18 (122 aa).

Basic residues predominate over residues 1–16 (MFKKVDRKASRQKKQM). A disordered region spans residues 1 to 29 (MFKKVDRKASRQKKQMSIRNKISGTPERP).

Belongs to the universal ribosomal protein uL18 family. Part of the 50S ribosomal subunit; part of the 5S rRNA/L5/L18/L25 subcomplex. Contacts the 5S and 23S rRNAs.

Functionally, this is one of the proteins that bind and probably mediate the attachment of the 5S RNA into the large ribosomal subunit, where it forms part of the central protuberance. This Fusobacterium nucleatum subsp. nucleatum (strain ATCC 25586 / DSM 15643 / BCRC 10681 / CIP 101130 / JCM 8532 / KCTC 2640 / LMG 13131 / VPI 4355) protein is Large ribosomal subunit protein uL18.